The primary structure comprises 245 residues: Oncostatin-M (245 aa).

The signal sequence occupies residues 1–26 (MGAQRMQRTLLSLVLRLLLLCTVATG). 2 cysteine pairs are disulfide-bonded: C28/C135 and C71/C177. The N-linked (GlcNAc...) asparagine glycan is linked to N97. Disordered regions lie at residues 143–171 (SSDP…STFQ) and 197–245 (WGER…APAR). A compositionally biased stretch (pro residues) spans 153 to 166 (QPGPGPTPLPPTPP). The span at 203–218 (RSRRHSPCRALKRGAR) shows a compositional bias: basic residues. The propeptide occupies 207 to 245 (HSPCRALKRGARRTQPFPEIRRLAPRGQPPGSLWGAPAR).

It belongs to the LIF/OSM family. Post-translationally, propeptide processing is not important for receptor binding activity but may be important growth-inhibitory activity.

The protein resides in the secreted. Functionally, growth regulator. Inhibits the proliferation of a number of tumor cell lines. It regulates cytokine production, including IL-6, G-CSF and GM-CSF from endothelial cells. Uses both type I OSM receptor (heterodimers composed of LIFR and IL6ST) and type II OSM receptor (heterodimers composed of OSMR and IL6ST). Involved in the maturation of fetal hepatocytes, thereby promoting liver development and regeneration. This chain is Oncostatin-M (OSM), found in Bos taurus (Bovine).